The sequence spans 377 residues: MPTLAPSGQLEIQAIGDVSTEAGAIITNAEIAYHRWGEYRVDKEGRSNVVLIEHALTGDSNAADWWADLLGPGKAINTDIYCVICTNVIGGCNGSTGPGSMHPDGNFWGNRFPATSIRDQVNAEKQFLDALGITTVAAVLGGSMGGARTLEWAAMYPETVGAAAVLAVSARASAWQIGIQSAQIKAIENDHHWHEGNYYESGCNPATGLGAARRIAHLTYRGELEIDERFGTKAQKNENPLGPYRKPDQRFAVESYLDYQADKLVQRFDAGSYVLLTDALNRHDIGRDRGGLNKALESIKVPVLVAGVDTDILYPYHQQEHLSRNLGNLLAMAKIVSPVGHDAFLTESRQMDRIVRNFFSLISPDEDNPSTYIEFYI.

Residues 48 to 347 (NVVLIEHALT…PVGHDAFLTE (300 aa)) form the AB hydrolase-1 domain. The active-site Nucleophile is Ser143. Residue Arg213 participates in substrate binding. Catalysis depends on residues Asp311 and His341. Asp342 contributes to the substrate binding site.

The protein belongs to the AB hydrolase superfamily. MetX family. Homodimer.

Its subcellular location is the cytoplasm. It catalyses the reaction L-homoserine + acetyl-CoA = O-acetyl-L-homoserine + CoA. Its pathway is amino-acid biosynthesis; L-methionine biosynthesis via de novo pathway; O-acetyl-L-homoserine from L-homoserine: step 1/1. Transfers an acetyl group from acetyl-CoA to L-homoserine, forming acetyl-L-homoserine. This Corynebacterium glutamicum (strain ATCC 13032 / DSM 20300 / JCM 1318 / BCRC 11384 / CCUG 27702 / LMG 3730 / NBRC 12168 / NCIMB 10025 / NRRL B-2784 / 534) protein is Homoserine O-acetyltransferase.